Reading from the N-terminus, the 523-residue chain is Xanthotoxin 5-hydroxylase CYP82C2 (523 aa).

A helical transmembrane segment spans residues 1-21 (MDTSLFSLFVPILVFVFIALF). A heme-binding site is contributed by Cys462.

It belongs to the cytochrome P450 family. Requires heme as cofactor.

It is found in the membrane. It carries out the reaction xanthotoxin + reduced [NADPH--hemoprotein reductase] + O2 = 5-hydroxyxanthotoxin + oxidized [NADPH--hemoprotein reductase] + H2O + 2 H(+). The enzyme catalyses indole-3-carbonyl nitrile + reduced [NADPH--hemoprotein reductase] + O2 = 4-hydroxy-indole-3-carbonyl nitrile + oxidized [NADPH--hemoprotein reductase] + H2O + H(+). In terms of biological role, involved in the biosynthetic pathway to 4-hydroxyindole-3-carbonyl nitrile (4-OH-ICN), a cyanogenic metabolite required for inducible pathogen defense. Converts indole-3-carbonyl nitrile (ICN) into 4-OH-ICN. Can hydroxylate xanthotoxin (8-methoxypsoralen) to form 5-hydroxyxanthotoxin (5-hydroxy-8-methoxypsoralen) in vivo and in vitro. The sequence is that of Xanthotoxin 5-hydroxylase CYP82C2 from Arabidopsis thaliana (Mouse-ear cress).